We begin with the raw amino-acid sequence, 277 residues long: Large ribosomal subunit protein uL2 (277 aa).

2 disordered regions span residues 37–59 (KNST…GGHK) and 221–265 (RGTA…KRTD). A compositionally biased stretch (basic residues) spans 50–59 (TTRHRGGGHK). The segment covering 229-241 (DHPHGGGEGRTGE) has biased composition (basic and acidic residues).

The protein belongs to the universal ribosomal protein uL2 family. Part of the 50S ribosomal subunit. Forms a bridge to the 30S subunit in the 70S ribosome.

One of the primary rRNA binding proteins. Required for association of the 30S and 50S subunits to form the 70S ribosome, for tRNA binding and peptide bond formation. It has been suggested to have peptidyltransferase activity; this is somewhat controversial. Makes several contacts with the 16S rRNA in the 70S ribosome. In Chromobacterium violaceum (strain ATCC 12472 / DSM 30191 / JCM 1249 / CCUG 213 / NBRC 12614 / NCIMB 9131 / NCTC 9757 / MK), this protein is Large ribosomal subunit protein uL2.